The following is a 274-amino-acid chain: Coagulation factor IX (274 aa).

Residue Tyr-23 is modified to Sulfotyrosine. Asn-25 carries an N-linked (GlcNAc...) asparagine glycan. Ser-26 is modified (phosphoserine). Asn-35 carries an N-linked (GlcNAc...) asparagine glycan. An O-linked (GalNAc...) threonine glycan is attached at Thr-37. N-linked (GlcNAc...) asparagine glycosylation occurs at Asn-40. Residues 49–274 (VVGGEDAARG…IYTKVSRYEV (226 aa)) form the Peptidase S1 domain. Cys-74 and Cys-90 are disulfide-bonded. His-89 (charge relay system) is an active-site residue. Residues Glu-103, Asn-105, Glu-110, and Glu-113 each coordinate Ca(2+). Asn-128 carries N-linked (GlcNAc...) asparagine glycosylation. Residue Asp-137 is the Charge relay system of the active site. 2 disulfides stabilise this stretch: Cys-204-Cys-218 and Cys-229-Cys-257. Ser-233 serves as the catalytic Charge relay system.

It belongs to the peptidase S1 family. As to quaternary structure, heterodimer of a light chain and a heavy chain; disulfide-linked. Interacts (inactive and activated) with F11 (activated) in calcium-dependent manner. Interacts with SERPINC1. Post-translationally, activated by factor XIa, which excises the activation peptide. The propeptide can also be removed by snake venom protease. Activated by coagulation factor VIIa-tissue factor (F7-F3) complex in calcium-dependent manner.

Its subcellular location is the secreted. The enzyme catalyses Selective cleavage of Arg-|-Ile bond in factor X to form factor Xa.. Its function is as follows. Factor IX is a vitamin K-dependent plasma protein that participates in the intrinsic pathway of blood coagulation by converting factor X to its active form in the presence of Ca(2+) ions, phospholipids, and factor VIIIa. The chain is Coagulation factor IX (F9) from Ovis aries (Sheep).